The sequence spans 386 residues: LL-diaminopimelate aminotransferase (386 aa).

Substrate contacts are provided by Tyr-13 and Gly-38. Pyridoxal 5'-phosphate contacts are provided by residues Tyr-67, 101 to 102 (SK), Tyr-126, Asn-176, Tyr-207, and 235 to 237 (SLS). Lys-102, Tyr-126, and Asn-176 together coordinate substrate. Position 238 is an N6-(pyridoxal phosphate)lysine (Lys-238). A pyridoxal 5'-phosphate-binding site is contributed by Arg-246. Arg-364 lines the substrate pocket.

It belongs to the class-I pyridoxal-phosphate-dependent aminotransferase family. LL-diaminopimelate aminotransferase subfamily. In terms of assembly, homodimer. Requires pyridoxal 5'-phosphate as cofactor.

It carries out the reaction (2S,6S)-2,6-diaminopimelate + 2-oxoglutarate = (S)-2,3,4,5-tetrahydrodipicolinate + L-glutamate + H2O + H(+). It participates in amino-acid biosynthesis; L-lysine biosynthesis via DAP pathway; LL-2,6-diaminopimelate from (S)-tetrahydrodipicolinate (aminotransferase route): step 1/1. In terms of biological role, involved in the synthesis of meso-diaminopimelate (m-DAP or DL-DAP), required for both lysine and peptidoglycan biosynthesis. Catalyzes the direct conversion of tetrahydrodipicolinate to LL-diaminopimelate. The protein is LL-diaminopimelate aminotransferase of Natranaerobius thermophilus (strain ATCC BAA-1301 / DSM 18059 / JW/NM-WN-LF).